Reading from the N-terminus, the 542-residue chain is CTP synthase (542 aa).

The interval 1–264 (MKFIFITGGV…AKLIINKLKL (264 aa)) is amidoligase domain. Serine 12 serves as a coordination point for CTP. Serine 12 provides a ligand contact to UTP. 13–18 (SLGKGI) contacts ATP. An L-glutamine-binding site is contributed by tyrosine 53. Aspartate 70 is a binding site for ATP. Mg(2+)-binding residues include aspartate 70 and glutamate 138. CTP is bound by residues 145–147 (DIE), 185–190 (KTKPTQ), and lysine 221. UTP-binding positions include 185–190 (KTKPTQ) and lysine 221. ATP is bound at residue 237–239 (KDA). The 244-residue stretch at 298 to 541 (YIMLKDAYTS…VKSALDKKLK (244 aa)) folds into the Glutamine amidotransferase type-1 domain. Glycine 359 contributes to the L-glutamine binding site. Cysteine 386 (nucleophile; for glutamine hydrolysis) is an active-site residue. Residues 387–390 (LGMQ), glutamate 410, and arginine 467 each bind L-glutamine. Active-site residues include histidine 514 and glutamate 516.

It belongs to the CTP synthase family. Homotetramer.

It catalyses the reaction UTP + L-glutamine + ATP + H2O = CTP + L-glutamate + ADP + phosphate + 2 H(+). It carries out the reaction L-glutamine + H2O = L-glutamate + NH4(+). The enzyme catalyses UTP + NH4(+) + ATP = CTP + ADP + phosphate + 2 H(+). It participates in pyrimidine metabolism; CTP biosynthesis via de novo pathway; CTP from UDP: step 2/2. Its activity is regulated as follows. Allosterically activated by GTP, when glutamine is the substrate; GTP has no effect on the reaction when ammonia is the substrate. The allosteric effector GTP functions by stabilizing the protein conformation that binds the tetrahedral intermediate(s) formed during glutamine hydrolysis. Inhibited by the product CTP, via allosteric rather than competitive inhibition. Catalyzes the ATP-dependent amination of UTP to CTP with either L-glutamine or ammonia as the source of nitrogen. Regulates intracellular CTP levels through interactions with the four ribonucleotide triphosphates. The polypeptide is CTP synthase (Methanococcus aeolicus (strain ATCC BAA-1280 / DSM 17508 / OCM 812 / Nankai-3)).